The following is a 507-amino-acid chain: Arabinose import ATP-binding protein AraG (507 aa).

ABC transporter domains lie at 8–243 (LSFH…MVGR) and 255–499 (PHGE…MLRI). 40 to 47 (GENGAGKS) is an ATP binding site.

This sequence belongs to the ABC transporter superfamily. Arabinose importer (TC 3.A.1.2.2) family. As to quaternary structure, the complex is composed of two ATP-binding proteins (AraG), two transmembrane proteins (AraH) and a solute-binding protein (AraF).

It localises to the cell inner membrane. The catalysed reaction is L-arabinose(out) + ATP + H2O = L-arabinose(in) + ADP + phosphate + H(+). Its function is as follows. Part of the ABC transporter complex AraFGH involved in arabinose import. Responsible for energy coupling to the transport system. This is Arabinose import ATP-binding protein AraG from Pectobacterium atrosepticum (strain SCRI 1043 / ATCC BAA-672) (Erwinia carotovora subsp. atroseptica).